A 427-amino-acid polypeptide reads, in one-letter code: BTB/POZ domain-containing protein KCTD16 (427 aa).

Residues Glu25–Asp98 form the BTB domain. At Tyr112 the chain carries Phosphotyrosine. 4 positions are modified to phosphoserine: Ser130, Ser137, Ser143, and Ser146.

Homopentamer; forms an open pentamer. In contrast to other BTB domain-containing proteins, does not interact with CUL3. Interacts as a tetramer with GABBR1 and GABBR2. Expressed in the brain, mainly in the hippocampus.

It is found in the presynaptic cell membrane. It localises to the postsynaptic cell membrane. Functionally, auxiliary subunit of GABA-B receptors that determine the pharmacology and kinetics of the receptor response. Increases agonist potency and markedly alter the G-protein signaling of the receptors by accelerating onset and promoting desensitization. The sequence is that of BTB/POZ domain-containing protein KCTD16 (Kctd16) from Mus musculus (Mouse).